A 367-amino-acid polypeptide reads, in one-letter code: Chorismate synthase (367 aa).

An NADP(+)-binding site is contributed by Arg-48. FMN contacts are provided by residues 125 to 127, 243 to 244, Gly-283, 298 to 302, and Arg-324; these read RSS, NA, and KPTSS.

Belongs to the chorismate synthase family. As to quaternary structure, homotetramer. FMNH2 serves as cofactor.

It catalyses the reaction 5-O-(1-carboxyvinyl)-3-phosphoshikimate = chorismate + phosphate. It participates in metabolic intermediate biosynthesis; chorismate biosynthesis; chorismate from D-erythrose 4-phosphate and phosphoenolpyruvate: step 7/7. In terms of biological role, catalyzes the anti-1,4-elimination of the C-3 phosphate and the C-6 proR hydrogen from 5-enolpyruvylshikimate-3-phosphate (EPSP) to yield chorismate, which is the branch point compound that serves as the starting substrate for the three terminal pathways of aromatic amino acid biosynthesis. This reaction introduces a second double bond into the aromatic ring system. This chain is Chorismate synthase, found in Psychrobacter arcticus (strain DSM 17307 / VKM B-2377 / 273-4).